The following is a 218-amino-acid chain: Large ribosomal subunit protein uL3 (218 aa).

Residues 126–169 (HGFSRGPMTHGSKNHRQPGSIGAGTTPGRIYPGKRMSGRYGGKK) are disordered.

The protein belongs to the universal ribosomal protein uL3 family. As to quaternary structure, part of the 50S ribosomal subunit. Forms a cluster with proteins L14 and L19.

Functionally, one of the primary rRNA binding proteins, it binds directly near the 3'-end of the 23S rRNA, where it nucleates assembly of the 50S subunit. In Synechococcus sp. (strain CC9902), this protein is Large ribosomal subunit protein uL3.